A 235-amino-acid chain; its full sequence is Orotidine 5'-phosphate decarboxylase (235 aa).

Residues aspartate 12, lysine 34, aspartate 61 to threonine 70, threonine 116, arginine 177, glutamine 186, glycine 206, and arginine 207 contribute to the substrate site. Lysine 63 functions as the Proton donor in the catalytic mechanism.

The protein belongs to the OMP decarboxylase family. Type 1 subfamily. As to quaternary structure, homodimer.

It catalyses the reaction orotidine 5'-phosphate + H(+) = UMP + CO2. It functions in the pathway pyrimidine metabolism; UMP biosynthesis via de novo pathway; UMP from orotate: step 2/2. Functionally, catalyzes the decarboxylation of orotidine 5'-monophosphate (OMP) to uridine 5'-monophosphate (UMP). This is Orotidine 5'-phosphate decarboxylase from Rhizobium etli (strain ATCC 51251 / DSM 11541 / JCM 21823 / NBRC 15573 / CFN 42).